A 254-amino-acid polypeptide reads, in one-letter code: MDQSSEGCMKKISSVNLDKLINDFSQIEKKMVETNGKNNILDIQLEKSNCLLKVMQAKEVSIKEECATLHNIIKGLQQTIEYQQNLKGENEQLKISADLIKEKLKSHEQEYKNNIAKLVSEMKIKEEGYKKEISKLYQDMQRKVELNEEKHKELIEKKEMEISELNAKLRSQEKEKQNEIIKLQLEFDAKLARVQTKSKSYQDSTVLPQSIYRRKLQHFQEEKNKEIAILRNTIRDLEQRLSVGKDSHLKRRRF.

A coiled-coil region spans residues 61-246 (SIKEECATLH…LEQRLSVGKD (186 aa)).

As to expression, detected in stomach.

This Homo sapiens (Human) protein is Coiled-coil domain-containing protein 152 (CCDC152).